The chain runs to 165 residues: Myosin regulatory light chain 2B, cardiac muscle isoform (165 aa).

Alanine 2 carries the post-translational modification N,N,N-trimethylalanine. 3 EF-hand domains span residues 23–58 (TQIQ…LGRL), 93–128 (DPEE…QEGR), and 129–164 (FSQE…GEEK). Positions 36, 38, 40, and 47 each coordinate Ca(2+).

As to quaternary structure, myosin is a hexamer of 2 heavy chains and 4 light chains. In terms of processing, the N-terminus is blocked. N,N,N-trimethylalanine, found in other myosin light chains would not have been detected in the N-terminal tryptic peptide in PubMed:7319048 because it would remain trimethylated and ninhydrin negative after hydrolysis.

This is Myosin regulatory light chain 2B, cardiac muscle isoform from Gallus gallus (Chicken).